The chain runs to 99 residues: Large ribosomal subunit protein bL21 (99 aa).

It belongs to the bacterial ribosomal protein bL21 family. As to quaternary structure, part of the 50S ribosomal subunit. Contacts protein L20.

Its function is as follows. This protein binds to 23S rRNA in the presence of protein L20. In Mycoplasmopsis pulmonis (strain UAB CTIP) (Mycoplasma pulmonis), this protein is Large ribosomal subunit protein bL21.